A 207-amino-acid polypeptide reads, in one-letter code: LexA repressor (207 aa).

The H-T-H motif DNA-binding region spans 28-48 (VREIGEAVGLASSSTVHGHLS). Catalysis depends on for autocatalytic cleavage activity residues Ser-130 and Lys-168.

It belongs to the peptidase S24 family. In terms of assembly, homodimer.

It catalyses the reaction Hydrolysis of Ala-|-Gly bond in repressor LexA.. Represses a number of genes involved in the response to DNA damage (SOS response), including recA and lexA. In the presence of single-stranded DNA, RecA interacts with LexA causing an autocatalytic cleavage which disrupts the DNA-binding part of LexA, leading to derepression of the SOS regulon and eventually DNA repair. This Staphylococcus carnosus (strain TM300) protein is LexA repressor.